The chain runs to 162 residues: 2-C-methyl-D-erythritol 2,4-cyclodiphosphate synthase (162 aa).

A divalent metal cation-binding residues include Asp8 and His10. Residues 8 to 10 and 34 to 35 each bind 4-CDP-2-C-methyl-D-erythritol 2-phosphate; these read DVH and HS. A divalent metal cation is bound at residue His42. 4-CDP-2-C-methyl-D-erythritol 2-phosphate is bound by residues 56–58, 61–65, 132–135, Phe139, and Lys142; these read DIG, FPDND, and TTTE.

This sequence belongs to the IspF family. In terms of assembly, homotrimer. A divalent metal cation serves as cofactor.

It catalyses the reaction 4-CDP-2-C-methyl-D-erythritol 2-phosphate = 2-C-methyl-D-erythritol 2,4-cyclic diphosphate + CMP. It participates in isoprenoid biosynthesis; isopentenyl diphosphate biosynthesis via DXP pathway; isopentenyl diphosphate from 1-deoxy-D-xylulose 5-phosphate: step 4/6. Involved in the biosynthesis of isopentenyl diphosphate (IPP) and dimethylallyl diphosphate (DMAPP), two major building blocks of isoprenoid compounds. Catalyzes the conversion of 4-diphosphocytidyl-2-C-methyl-D-erythritol 2-phosphate (CDP-ME2P) to 2-C-methyl-D-erythritol 2,4-cyclodiphosphate (ME-CPP) with a corresponding release of cytidine 5-monophosphate (CMP). The protein is 2-C-methyl-D-erythritol 2,4-cyclodiphosphate synthase of Pelotomaculum thermopropionicum (strain DSM 13744 / JCM 10971 / SI).